We begin with the raw amino-acid sequence, 138 residues long: Large ribosomal subunit protein uL16 (138 aa).

A disordered region spans residues 1 to 22 (MQQPARTKYRKQQKGRNKGIAT). Positions 7–17 (TKYRKQQKGRN) are enriched in basic residues.

The protein belongs to the universal ribosomal protein uL16 family. As to quaternary structure, part of the 50S ribosomal subunit.

In terms of biological role, binds 23S rRNA and is also seen to make contacts with the A and possibly P site tRNAs. This Nitrosospira multiformis (strain ATCC 25196 / NCIMB 11849 / C 71) protein is Large ribosomal subunit protein uL16.